The sequence spans 143 residues: Endoribonuclease YbeY (143 aa).

Zn(2+) contacts are provided by His109, His113, and His119.

It belongs to the endoribonuclease YbeY family. It depends on Zn(2+) as a cofactor.

It is found in the cytoplasm. Functionally, single strand-specific metallo-endoribonuclease involved in late-stage 70S ribosome quality control and in maturation of the 3' terminus of the 16S rRNA. This chain is Endoribonuclease YbeY, found in Neorickettsia sennetsu (strain ATCC VR-367 / Miyayama) (Ehrlichia sennetsu).